The primary structure comprises 154 residues: Probable chemoreceptor glutamine deamidase CheD (154 aa).

The protein belongs to the CheD family.

It carries out the reaction L-glutaminyl-[protein] + H2O = L-glutamyl-[protein] + NH4(+). Its function is as follows. Probably deamidates glutamine residues to glutamate on methyl-accepting chemotaxis receptors (MCPs), playing an important role in chemotaxis. This is Probable chemoreceptor glutamine deamidase CheD from Methanococcus maripaludis (strain C6 / ATCC BAA-1332).